The primary structure comprises 84 residues: Large ribosomal subunit protein bL27 (84 aa).

Residues 1-21 (MAHKKAGGSTRNGRDSESKRL) are disordered.

It belongs to the bacterial ribosomal protein bL27 family.

The protein is Large ribosomal subunit protein bL27 of Baumannia cicadellinicola subsp. Homalodisca coagulata.